The following is a 398-amino-acid chain: Streptopain (398 aa).

The first 27 residues, 1 to 27 (MNKKKLGIRLLSLLALGGFVLANPVFA), serve as a signal peptide directing secretion. The propeptide occupies 28–145 (DQNFARNEKE…TTYAGTAEIK (118 aa)). Cysteine 192 (nucleophile) is an active-site residue. At cysteine 192 the chain carries Cysteine methyl disulfide; in zymogen form. Serine 282 and glycine 339 together coordinate a protein. Histidine 340 serves as the catalytic Proton acceptor. A C-terminal active site loop region spans residues 368–390 (RLDALNPSALGTGGGAGGFNGYQ).

It belongs to the peptidase C10 family. Monomer. The mature protease is derived from the precursor sequence by cleavage, either in cis via an autocatalytic mechanism, or in trans by mature SpeB or host proteases (trypsin, plasmin or subtilisin). Maturation can involve a number of protein cleavage intermediates. Mature SpeB probably plays the most important role in protein maturation in physiological conditions. Post-translationally, methylthiolation at Cys-192 of the inactive zymogen form is probably involved in the mechanism of secretion of the proteinase into the culture fluid.

It is found in the secreted. Its subcellular location is the host extracellular space. The protein resides in the host cytoplasm. The enzyme catalyses Preferential cleavage with hydrophobic residues at P2, P1 and P1'.. With respect to regulation, synthesized as an inactive zymogen to protect the intracellular components of the bacteria from proteolytic activity during protein production. Once secreted into the extracellular milieu, cleaved into the active protease: maturation can be mediated in cis by autocatalytic cleavage, or in trans by mature SpeB or host proteases. Protease activity is strongly inhibited by zinc and copper, which prevent its maturation into an active protease: inhibition by metal ions may be required to prevent proteolysis of streptococcal proteins. Cysteine protease that acts as a key streptococcal virulence factor by cleaving host proteins involved in immune response. Triggers inflammation by mediating cleavage of host proteins, which can both promote host pathogenesis by triggering sterile inflammation and/or restrict streptococcal infection, depending on host immune statue and infection site. Cleaves host gasdermin-A (GSDMA) in epithelial cells, promoting GSDMA activation and formation of gasdermin pores, triggering pyroptosis. Pyroptosis triggers the elimination of the infected skin cell, depriving the pathogen of its protective niche, while inducing an inflammatory response. This ultimately prevents bacterial penetration of the epithelial barrier and a subsequent systemic dissemination of the pathogen. Also mediates cleavage of the cytokine precursor interleukin-1 beta (IL1B) to its mature form, resulting in inflammation and septic shock. SpeB-mediated maturation of IL1B plays a dual role depending on infection site: while IL1B inflammatory response prevents bacterial growth during invasive skin infections, it promotes streptococcal infection of the nasopharynx by disrupting colonization resistance mediated by the microbiota. Inhibits host autophagy be catalyzing cleavage and inactivation of key autophagy factors, such as CALCOCO2, NBR1 and SQSTM1. Cleaves and inhibits a number of complement factors, such as C2, C3-beta chain of C3, C4, C5 or SERPING1, thereby promoting evasion of host immunity. May also impair adaptive immunity by catalyzing cleavage and degradation of host immunoglobulins to promote immune system evasion; the relevance of this activity is however unsure in vivo. Catalyzes maturation and release of the peptide hormone bradykinin from the precursor Kininogen-1 (KNG1) to produce hypotension during septic shock. Also involved in bacterial translocation across the host epithelial barrier by mediating cleavage and degradation of host epithelial junction proteins, such as CDH1 and OCLN. Additionally, has been involved in degradation of fibronectin and vitronectin, two host extracellular matrix proteins involved in tissue integrity. Also able to catalyze cleavage and degradation of streptococcal proteins, such as C5a peptidase, EndoS or SmeZ. Degradation of streptococcal proteins is however strictly regulated to preserve integrity of other virulence factors. This is Streptopain (speB) from Streptococcus pyogenes serotype M28 (strain MGAS6180).